Consider the following 196-residue polypeptide: Ribosome maturation factor RimP (196 aa).

Residues 164 to 196 (LAPQKPNKPGPKKPGHDKKKPSNEPAAGKPRAE) form a disordered region. Over residues 173 to 182 (GPKKPGHDKK) the composition is skewed to basic residues.

The protein belongs to the RimP family.

The protein resides in the cytoplasm. Required for maturation of 30S ribosomal subunits. The sequence is that of Ribosome maturation factor RimP from Xanthomonas campestris pv. campestris (strain B100).